We begin with the raw amino-acid sequence, 329 residues long: Prostaglandin reductase 1 (329 aa).

Threonine 18 is modified (phosphothreonine). Phosphoserine is present on serine 20. NADP(+)-binding positions include 152–155 (GAVG), lysine 178, tyrosine 193, asparagine 217, 239–245 (CGAISTY), 270–272 (FIV), and asparagine 321. Lysine 178 is subject to N6-(2-hydroxyisobutyryl)lysine; alternate. Position 178 is an N6-acetyllysine; alternate (lysine 178).

It belongs to the NADP-dependent oxidoreductase L4BD family. Monomer or homodimer. As to expression, ubiquitously distributed in various tissues and leukocytes, the kidney and liver had the highest enzyme activities.

The protein localises to the cytoplasm. It catalyses the reaction 13,14-dihydro-15-oxo-prostaglandin E1 + NADP(+) = 15-oxoprostaglandin E1 + NADPH + H(+). The catalysed reaction is 13,14-dihydro-15-oxo-prostaglandin E2 + NADP(+) = 15-oxoprostaglandin E2 + NADPH + H(+). It carries out the reaction 13,14-dihydro-15-oxo-prostaglandin E2 + NAD(+) = 15-oxoprostaglandin E2 + NADH + H(+). The enzyme catalyses 13,14-dihydro-15-oxo-prostaglandin F1alpha + NADP(+) = 15-oxoprostaglandin F1alpha + NADPH + H(+). It catalyses the reaction 13,14-dihydro-15-oxo-PGF2alpha + NADP(+) = 15-oxoprostaglandin F2alpha + NADPH + H(+). The catalysed reaction is leukotriene B4 + NADP(+) = 12-oxo-leukotriene B4 + NADPH + H(+). It carries out the reaction 20-hydroxy-leukotriene B4 + NADP(+) = 12-oxo-20-hydroxy-leukotriene B4 + NADPH + H(+). The enzyme catalyses 6-trans-leukotriene B4 + NADP(+) = 12-oxo-(5S)-hydroxy-(6E,8E,10E,14Z)-eicosatetraenoate + NADPH + H(+). It catalyses the reaction (5S,12S)-dihydroxy-(6E,10E,12E,14Z)-eicosatetraenoate + NADP(+) = 12-oxo-(5S)-hydroxy-(6E,8E,10E,14Z)-eicosatetraenoate + NADPH + H(+). The catalysed reaction is 15-oxo-(5S,6R)-dihydroxy-(7E,9E,11Z,13E)-eicosatetraenoate + NADH + H(+) = 15-oxo-(5S,6R)-dihydroxy-(7E,9E,11Z)-eicosatrienoate + NAD(+). It carries out the reaction an n-alkanal + NADP(+) = an alk-2-enal + NADPH + H(+). The enzyme catalyses hexanal + NADP(+) = (E)-hex-2-enal + NADPH + H(+). It catalyses the reaction octanal + NADP(+) = (2E)-octenal + NADPH + H(+). The catalysed reaction is decanal + NADP(+) = (2E)-decenal + NADPH + H(+). It carries out the reaction dodecanal + NADP(+) = (2E)-dodecenal + NADPH + H(+). The enzyme catalyses 4-hydroxynonanal + NADP(+) = (E)-4-hydroxynon-2-enal + NADPH + H(+). It catalyses the reaction pentan-2-one + NADP(+) = (E)-pent-3-en-2-one + NADPH + H(+). The catalysed reaction is nonan-2-one + NADP(+) = (3E)-nonen-2-one + NADPH + H(+). Down-regulated by nonsteroidal anti-inflammatory drugs diclofenac, indomethacin and niflumic acid. NAD(P)H-dependent oxidoreductase involved in metabolic inactivation of pro- and anti-inflammatory eicosanoids: prostaglandins (PG), leukotrienes (LT) and lipoxins (LX). Preferentially uses NADPH over NADH as cofactor. Catalyzes with high efficiency the reduction of the 13,14 double bond of 15-oxoPGs, including 15-oxo-PGE1, 15-oxo-PGE2, 15-oxo-PGF1-alpha and 15-oxo-PGF2-alpha. Catalyzes with lower efficiency the oxidation of the hydroxyl group at C12 of LTB4 and its derivatives, converting them into biologically less active 12-oxo-LTB4 metabolites. Reduces 15-oxo-LXA4 to 13,14 dihydro-15-oxo-LXA4 and may promote neutrophil recruitment at the inflammatory site. Plays a role in metabolic detoxification of alkenals and ketones. Reduces alpha,beta-unsaturated alkenals and ketones, particularly those with medium-chain length, showing highest affinity toward (2E)-decenal and (3E)-3-nonen-2-one. May inactivate 4-hydroxy-2-nonenal, a cytotoxic lipid constituent of oxidized low-density lipoprotein particles. The polypeptide is Prostaglandin reductase 1 (PTGR1) (Sus scrofa (Pig)).